The following is a 318-amino-acid chain: Probable casein kinase I homolog ECU11_1980 (318 aa).

The Protein kinase domain maps to 8–276 (YTICREIGKG…YLNSLLDKIF (269 aa)). Residues 14-22 (IGKGGFGKV) and Lys-37 contribute to the ATP site. Asp-129 functions as the Proton acceptor in the catalytic mechanism.

The protein belongs to the protein kinase superfamily. CK1 Ser/Thr protein kinase family. Casein kinase I subfamily.

It is found in the nucleus. It catalyses the reaction L-seryl-[protein] + ATP = O-phospho-L-seryl-[protein] + ADP + H(+). The enzyme catalyses L-threonyl-[protein] + ATP = O-phospho-L-threonyl-[protein] + ADP + H(+). Involved in DNA repair. May regulate the activity of protein(s) involved in double strand break repair caused by gamma rays. The polypeptide is Probable casein kinase I homolog ECU11_1980 (Encephalitozoon cuniculi (strain GB-M1) (Microsporidian parasite)).